The following is a 148-amino-acid chain: Lysozyme C (148 aa).

An N-terminal signal peptide occupies residues Met-1 to Gly-18. The region spanning Lys-19–Val-148 is the C-type lysozyme domain. 4 cysteine pairs are disulfide-bonded: Cys-24–Cys-146, Cys-48–Cys-134, Cys-83–Cys-99, and Cys-95–Cys-113. Catalysis depends on residues Glu-53 and Asp-71.

The protein belongs to the glycosyl hydrolase 22 family. In terms of assembly, monomer.

The catalysed reaction is Hydrolysis of (1-&gt;4)-beta-linkages between N-acetylmuramic acid and N-acetyl-D-glucosamine residues in a peptidoglycan and between N-acetyl-D-glucosamine residues in chitodextrins.. Its function is as follows. Lysozymes have primarily a bacteriolytic function; those in tissues and body fluids are associated with the monocyte-macrophage system and enhance the activity of immunoagents. In Gorilla gorilla gorilla (Western lowland gorilla), this protein is Lysozyme C (LYZ).